Here is a 1013-residue protein sequence, read N- to C-terminus: RNA-binding protein 44 (1013 aa).

Disordered stretches follow at residues 1–25 and 56–94; these read MQAT…FQND and LATE…IFSQ. Over residues 56–76 the composition is skewed to basic and acidic residues; the sequence is LATEERASDKENSIVDQRDLS. Residues 78-94 show a composition bias toward polar residues; the sequence is LSFSENQDSNRGNIFSQ. Phosphoserine occurs at positions 365, 368, 510, 681, and 688. An RRM domain is found at 792–865; it reads FLIHVGGLCP…KSVTVRLVKI (74 aa). The segment at 905 to 925 is disordered; it reads RAKSRQLESEQDSEFPPLDQG.

As to quaternary structure, homodimer. Interacts with TEX14. As to expression, highly expressed in testis. Also expressed in other tissues at lower level.

It localises to the cytoplasm. Its function is as follows. Component of intercellular bridges during meiosis. Intercellular bridges are evolutionarily conserved structures that connect differentiating germ cells. Not required for fertility. The chain is RNA-binding protein 44 (Rbm44) from Mus musculus (Mouse).